The chain runs to 100 residues: Vesicle-associated membrane protein 8 (100 aa).

Met-1 is modified (N-acetylmethionine). Residues 1–75 (MEEASEGGGN…ARKFWWKNVK (75 aa)) are Cytoplasmic-facing. A phosphoserine mark is found at Ser-5 and Ser-18. The v-SNARE coiled-coil homology domain maps to 12-72 (RVRNLQSEVE…QKVARKFWWK (61 aa)). 3 positions are modified to phosphothreonine: Thr-28, Thr-48, and Thr-54. A Phosphoserine modification is found at Ser-55. 2 (Microbial infection) N6-stearoyl lysine lipidation sites follow: Lys-64 and Lys-68. The helical; Anchor for type IV membrane protein transmembrane segment at 76–96 (MIVLICVIVFIIILFIVLFAT) threads the bilayer. Over 97–100 (GAFS) the chain is Vesicular.

This sequence belongs to the synaptobrevin family. Forms a SNARE complex composed of VAMP8, SNAP29 and STX17 involved in fusion of autophagosome with lysosome. Found in a number of SNARE complexes with NAPA, SNAP23, SNAP25, STX1A, STX4, STX7, STX8 and VTI1B. Interacts with PICALM. SNARE complex formation and binding by PICALM are mutually exclusive processes for VAMP8. Interacts with SBF2/MTMR13. Interacts with RAB21 (in GTP-bound form) in response to starvation; the interaction probably regulates VAMP8 endolysosomal trafficking. Interacts with STX17; this interaction is increased in the absence of TMEM39A. Interacts with TRIM6. In terms of assembly, (Microbial infection) The interaction with STX17 is decreased in presence of SARS coronavirus-2/SARS-CoV-2 ORF3A protein. In terms of processing, (Microbial infection) Stearoylated By S.flexneri N-epsilon-fatty acyltransferase IcsB, thereby disrupting the host actin cytoskeleton. As to expression, platelets.

It is found in the lysosome membrane. Its subcellular location is the early endosome membrane. It localises to the late endosome membrane. The protein localises to the cell membrane. The protein resides in the zymogen granule membrane. In terms of biological role, SNAREs, soluble N-ethylmaleimide-sensitive factor-attachment protein receptors, are essential proteins for fusion of cellular membranes. SNAREs localized on opposing membranes assemble to form a trans-SNARE complex, an extended, parallel four alpha-helical bundle that drives membrane fusion. VAMP8 is a SNARE involved in autophagy through the direct control of autophagosome membrane fusion with the lysososome membrane via its interaction with the STX17-SNAP29 binary t-SNARE complex. Also required for dense-granule secretion in platelets. Also plays a role in regulated enzyme secretion in pancreatic acinar cells. Involved in the abscission of the midbody during cell division, which leads to completely separate daughter cells. Involved in the homotypic fusion of early and late endosomes. Also participates in the activation of type I interferon antiviral response through a TRIM6-dependent mechanism. This chain is Vesicle-associated membrane protein 8, found in Homo sapiens (Human).